A 117-amino-acid chain; its full sequence is LPGARCAYDMTQTPASVEVAVGGTVTIKCQASQSISTYLSWYQQKPGQRPKLLIYRASTLASGVSSRFKGSGSGTEFTLTISGVECADAATYYCQQGWSSSNVENVFGGGTEVVVKG.

The N-terminal stretch at 1 to 6 (LPGARC) is a signal peptide. Residues 7–29 (AYDMTQTPASVEVAVGGTVTIKC) form a framework-1 region. C29 and C86 are joined by a disulfide. The complementarity-determining-1 stretch occupies residues 30-40 (QASQSISTYLS). Positions 41–55 (WYQQKPGQRPKLLIY) are framework-2. The complementarity-determining-2 stretch occupies residues 56-62 (RASTLAS). Residues 63–94 (GVSSRFKGSGSGTEFTLTISGVECADAATYYC) form a framework-3 region. The interval 95 to 106 (QQGWSSSNVENV) is complementarity-determining-3. The interval 107 to 116 (FGGGTEVVVK) is framework-4.

The sequence is that of Ig kappa chain V region 12F2 from Oryctolagus cuniculus (Rabbit).